The chain runs to 200 residues: Putative AgrB-like protein (200 aa).

Helical transmembrane passes span 49-69, 88-108, 114-134, 148-168, and 171-191; these read LIITIILALLLHELVPVLVFM, LLCTILTAVTFVGVPYLIQFT, LFRFILCLLLTVPIGMFSPAV, ALKHKAIITSLVFSFLQFLVS, and LGTIIVVSLLLVFTLIVPLKG.

This sequence belongs to the AgrB family.

The protein localises to the cell membrane. Functionally, may be involved in the proteolytic processing of a quorum sensing system signal molecule precursor. The chain is Putative AgrB-like protein from Lactiplantibacillus plantarum (strain ATCC BAA-793 / NCIMB 8826 / WCFS1) (Lactobacillus plantarum).